The chain runs to 1470 residues: MNPLMFTLLLLFGFLCIQIDGSRLRQEDFPPRIVEHPSDVIVSKGEPTTLNCKAEGRPTPTIEWYKDGERVETDKDDPRSHRMLLPSGSLFFLRIVHGRRSKPDEGSYVCVARNYLGEAVSRNASLEVALLRDDFRQNPTDVVVAAGEPAILECQPPRGHPEPTIYWKKDKVRIDDKEERISIRGGKLMISNTRKSDAGMYTCVGTNMVGERDSDPAELTVFERPTFLRRPINQVVLEEEAVEFRCQVQGDPQPTVRWKKDDADLPRGRYDIKDDYTLRIKKAMSTDEGTYVCIAENRVGKVEASATLTVRVRPVAPPQFVVRPRDQIVAQGRTVTFPCETKGNPQPAVFWQKEGSQNLLFPNQPQQPNSRCSVSPTGDLTITNIQRSDAGYYICQALTVAGSILAKAQLEVTDVLTDRPPPIILQGPINQTLAVDGTALLKCKATGEPLPVISWLKEGFTFLGRDPRATIQDQGTLQIKNLRISDTGTYTCVATSSSGETSWSAVLDVTESGATISKNYDMNDLPGPPSKPQVTDVSKNSVTLSWQPGTPGVLPASAYIIEAFSQSVSNSWQTVANHVKTTLYTVRGLRPNTIYLFMVRAINPQGLSDPSPMSDPVRTQDISPPAQGVDHRQVQKELGDVVVRLHNPVVLTPTTVQVTWTVDRQPQFIQGYRVMYRQTSGLQASTVWQNLDAKVPTERSAVLVNLKKGVTYEIKVRPYFNEFQGMDSESKTVRTTEEAPSAPPQSVTVLTVGSHNSTSISVSWDPPPADHQNGIIQEYKIWCLGNETRFHINKTVDAAIRSVVIGGLFPGIQYRVEVAASTSAGVGVKSEPQPIIIGGRNEVVITENNNSITEQITDVVKQPAFIAGIGGACWVILMGFSIWLYWRRKKRKGLSNYAVTFQRGDGGLMSNGSRPGLLNAGDPNYPWLADSWPATSLPVNNSNSGPNEIGNFGRGDVLPPVPGQGDKTATMLSDGAIYSSIDFTTKTTYNSSSQITQATPYATTQILHSNSIHELAVDLPDPQWKSSVQQKTDLMGFGYSLPDQNKGNNGGKGGKKKKTKNSSKAQKNNGSTWANVPLPPPPVQPLPGTELGHYAAEQENGYDSDSWCPPLPVQTYLHQGMEDELEEDEDRVPTPPVRGVASSPAISFGQQSTATLTPSPREEMQPMLQAHLDELTRAYQFDIAKQTWHIQSNTPPPQPPAPPLGYVSGALISDLETDVPDEDADDEEEPLEIPRPLRALDQTPGSSMDNLDSSVTGKAFSSSQRQRPTSPFSTDSNTSAAQNQSQRPRPTKKHKGGRMDPQPVLPHRREGMPDDLPPPPDPPPGQGLRQQIGLSQHSGNVENSTERKGSSLERQQAANLEDTKSSLDCPAKTVLEWQRQTQDWINSTERQEETRKAPHKQGVGSEESLVPYSKPSFPSPGGHSSSGTSSSKGSTGPRKADVLRGSHQRNANDLLDIGYVGSNSQGQFTE.

A signal peptide spans 1 to 21 (MNPLMFTLLLLFGFLCIQIDG). The Extracellular segment spans residues 22 to 863 (SRLRQEDFPP…EQITDVVKQP (842 aa)). 5 Ig-like C2-type domains span residues 31 to 127 (PRIV…ASLE), 133 to 220 (DDFR…AELT), 225 to 309 (PTFL…ATLT), 318 to 413 (PQFV…LEVT), and 422 to 508 (PIIL…AVLD). Cys52 and Cys110 are joined by a disulfide. A glycan (N-linked (GlcNAc...) asparagine) is linked at Asn123. Cystine bridges form between Cys154-Cys203, Cys246-Cys293, and Cys339-Cys395. Asn430 is a glycosylation site (N-linked (GlcNAc...) asparagine). The cysteines at positions 443 and 492 are disulfide-linked. 3 consecutive Fibronectin type-III domains span residues 528–622 (PPSK…TQDI), 641–739 (VVVR…TEEA), and 743–840 (PPQS…IGGR). 4 N-linked (GlcNAc...) asparagine glycosylation sites follow: Asn756, Asn786, Asn793, and Asn849. Residues 864-884 (AFIAGIGGACWVILMGFSIWL) form a helical membrane-spanning segment. The Cytoplasmic segment spans residues 885-1470 (YWRRKKRKGL…GSNSQGQFTE (586 aa)). 4 disordered regions span residues 1036-1089 (GFGY…LPGT), 1129-1159 (EDRVPTPPVRGVASSPAISFGQQSTATLTPS), 1190-1371 (IQSN…DCPA), and 1383-1470 (DWIN…QFTE). Residues 1144–1158 (PAISFGQQSTATLTP) are compositionally biased toward polar residues. At Thr1157 the chain carries Phosphothreonine. Phosphoserine is present on Ser1159. Over residues 1194–1203 (TPPPQPPAPP) the composition is skewed to pro residues. Positions 1215-1231 (LETDVPDEDADDEEEPL) are enriched in acidic residues. Positions 1243-1288 (TPGSSMDNLDSSVTGKAFSSSQRQRPTSPFSTDSNTSAAQNQSQRP) are enriched in polar residues. The segment covering 1315 to 1325 (DLPPPPDPPPG) has biased composition (pro residues). A compositionally biased stretch (polar residues) spans 1328–1343 (LRQQIGLSQHSGNVEN). Low complexity predominate over residues 1413-1437 (SKPSFPSPGGHSSSGTSSSKGSTGP). The segment covering 1461–1470 (GSNSQGQFTE) has biased composition (polar residues).

The protein belongs to the immunoglobulin superfamily. ROBO family. Interacts with SLIT2. Expressed in embryonal spinal cord.

It is found in the membrane. Its function is as follows. Receptor for SLIT2, and probably SLIT1, which are thought to act as molecular guidance cue in cellular migration, including axonal navigation at the ventral midline of the neural tube and projection of axons to different regions during neuronal development. The polypeptide is Roundabout homolog 2 (Robo2) (Mus musculus (Mouse)).